Consider the following 437-residue polypeptide: GTPase Obg (437 aa).

Residues 2 to 160 form the Obg domain; the sequence is SLFLDTARIE…KILLLELRVL (159 aa). The OBG-type G domain maps to 161-338; sequence ADVGLVGFPS…LLARTSELLA (178 aa). GTP-binding positions include 167-174, 192-196, 214-217, 284-287, and 319-321; these read GFPSVGKS, FTTIT, DMPG, NKMD, and SGL. S174 and T194 together coordinate Mg(2+). Positions 359 to 437 constitute an OCT domain; it reads GFEDEEKPFK…IQKFEFEFVD (79 aa).

The protein belongs to the TRAFAC class OBG-HflX-like GTPase superfamily. OBG GTPase family. In terms of assembly, monomer. Requires Mg(2+) as cofactor.

The protein localises to the cytoplasm. Its function is as follows. An essential GTPase which binds GTP, GDP and possibly (p)ppGpp with moderate affinity, with high nucleotide exchange rates and a fairly low GTP hydrolysis rate. Plays a role in control of the cell cycle, stress response, ribosome biogenesis and in those bacteria that undergo differentiation, in morphogenesis control. The sequence is that of GTPase Obg from Lactococcus lactis subsp. cremoris (strain SK11).